An 883-amino-acid polypeptide reads, in one-letter code: Integrator complex subunit 6-B (883 aa).

Positions 3–227 (ILLFLLDTSA…QCLESLVQKI (225 aa)) constitute a VWFA domain. The Inhibitory loop signature appears at 626–633 (MMIDEADE).

It belongs to the Integrator subunit 6 family. As to quaternary structure, component of the Integrator complex, composed of core subunits INTS1, INTS2, INTS3, INTS4, INTS5, INTS6, INTS7, INTS8, INTS9/RC74, INTS10, INTS11/CPSF3L, INTS12, INTS13, INTS14 and INTS15. The core complex associates with protein phosphatase 2A subunits PPP2CA and PPP2R1A, to form the Integrator-PP2A (INTAC) complex.

The protein localises to the nucleus. It is found in the chromosome. Component of the integrator complex, a multiprotein complex that terminates RNA polymerase II (Pol II) transcription in the promoter-proximal region of genes. The integrator complex provides a quality checkpoint during transcription elongation by driving premature transcription termination of transcripts that are unfavorably configured for transcriptional elongation: the complex terminates transcription by (1) catalyzing dephosphorylation of the C-terminal domain (CTD) of Pol II subunit POLR2A/RPB1 and SUPT5H/SPT5, (2) degrading the exiting nascent RNA transcript via endonuclease activity and (3) promoting the release of Pol II from bound DNA. The integrator complex is also involved in terminating the synthesis of non-coding Pol II transcripts, such as enhancer RNAs (eRNAs), small nuclear RNAs (snRNAs), telomerase RNAs and long non-coding RNAs (lncRNAs). Within the integrator complex, INTS6 acts as a molecular adapter that promotes assembly of protein phosphatase 2A (PP2A) subunits to the integrator core complex, promoting recruitment of PP2A to transcription pause-release checkpoint. This is Integrator complex subunit 6-B (ints6-b) from Xenopus laevis (African clawed frog).